Reading from the N-terminus, the 475-residue chain is Cytosolic enolase 3 (475 aa).

Serine 2 is modified (N-acetylserine). Substrate-binding residues include histidine 200 and glutamate 209. The active-site Proton donor is aspartate 252. Mg(2+) contacts are provided by aspartate 287, glutamate 336, and aspartate 361. Glutamate 336 and aspartate 361 together coordinate substrate. Lysine 386 acts as the Proton acceptor in catalysis. Residues 413-416 (SHRC) and lysine 437 each bind substrate.

It belongs to the enolase family. In terms of assembly, homodimer. Mg(2+) serves as cofactor.

It is found in the cytoplasm. The protein resides in the nucleus. The enzyme catalyses (2R)-2-phosphoglycerate = phosphoenolpyruvate + H2O. It participates in carbohydrate degradation; glycolysis; pyruvate from D-glyceraldehyde 3-phosphate: step 4/5. The sequence is that of Cytosolic enolase 3 (ENO3) from Arabidopsis thaliana (Mouse-ear cress).